The sequence spans 380 residues: Ubiquitin-like protein 7 (380 aa).

The region spanning 18 to 98 (APKSILQLPE…VLRKSWPEPD (81 aa)) is the Ubiquitin-like domain. The segment at 200–313 (TPMPGADSSS…SSGVQSGTPI (114 aa)) is disordered. Low complexity predominate over residues 206 to 221 (DSSSRSMPSSSYRDMP). Ser230 is modified (phosphoserine). Composition is skewed to low complexity over residues 239–253 (STRSTPSSSTPSSRP) and 270–293 (SELATALALASTPESSSHTPTPGT). The segment covering 294-313 (QGHSSGTSPMSSGVQSGTPI) has biased composition (polar residues). The region spanning 333-377 (SLQIQWQPQLQQLRDMGIQDDELSLRALQATGGDIQAALELIFAG) is the UBA domain.

As to quaternary structure, binds ubiquitin. Interacts with MAVS; this interaction enhances TRIM21-dependent 'Lys-27'-linked polyubiquitination of MAVS. Post-translationally, deubiquitinated by OTUD4 which stabilizes UBL7 expression.

Its function is as follows. Interferon-stimulated protein that positively regulates RNA virus-triggered innate immune signaling. Mechanistically, promotes 'Lys-27'-linked polyubiquitination of MAVS through TRIM21 leading to enhanced the IFN signaling pathway. The sequence is that of Ubiquitin-like protein 7 (Ubl7) from Mus musculus (Mouse).